We begin with the raw amino-acid sequence, 506 residues long: ATP synthase subunit alpha, plastid (506 aa).

Residue 170 to 177 (GDRQTGKT) coordinates ATP.

Belongs to the ATPase alpha/beta chains family. As to quaternary structure, F-type ATPases have 2 components, CF(1) - the catalytic core - and CF(0) - the membrane proton channel. CF(1) has five subunits: alpha(3), beta(3), gamma(1), delta(1), epsilon(1). CF(0) has four main subunits: a, b, b' and c.

It is found in the plastid membrane. The catalysed reaction is ATP + H2O + 4 H(+)(in) = ADP + phosphate + 5 H(+)(out). Produces ATP from ADP in the presence of a proton gradient across the membrane. The alpha chain is a regulatory subunit. In Prototheca wickerhamii, this protein is ATP synthase subunit alpha, plastid.